The chain runs to 425 residues: UPF0597 protein VF_0641 (425 aa).

It belongs to the UPF0597 family.

This is UPF0597 protein VF_0641 from Aliivibrio fischeri (strain ATCC 700601 / ES114) (Vibrio fischeri).